A 130-amino-acid chain; its full sequence is Cyclin-dependent kinase 4 inhibitor B (130 aa).

ANK repeat units follow at residues 5-34 (GSDA…DPNA), 38-66 (FGRR…EPNC), 71-100 (TLTR…RLDV), and 104-130 (WGRL…ATGD). Thr12 carries the phosphothreonine modification.

The protein belongs to the CDKN2 cyclin-dependent kinase inhibitor family. Heterodimer of CDKN2B with CDK4 or CDK6. In terms of tissue distribution, expression abundant in lung, less abundant in testis, barely detectable in liver, and not detectable in neonatal kidney, adult kidney, brain, heart, or spleen.

Its function is as follows. Interacts strongly with CDK4 and CDK6. Potent inhibitor. Potential effector of TGF-beta induced cell cycle arrest. This chain is Cyclin-dependent kinase 4 inhibitor B (Cdkn2b), found in Rattus norvegicus (Rat).